A 205-amino-acid polypeptide reads, in one-letter code: Holliday junction branch migration complex subunit RuvA (205 aa).

A domain I region spans residues 1–64 (MIGRLRGVLI…EDAQLLYGFI (64 aa)). The segment at 65–143 (TKQERSLFRL…SLMEASVGSE (79 aa)) is domain II. The interval 144–156 (REFVLQSNYSPAP) is flexible linker. Residues 157–205 (TVNSAEEDAISALISLGYKPPQASKAVSAAYKEGMDSETLIKAALKSML) form a domain III region.

The protein belongs to the RuvA family. Homotetramer. Forms an RuvA(8)-RuvB(12)-Holliday junction (HJ) complex. HJ DNA is sandwiched between 2 RuvA tetramers; dsDNA enters through RuvA and exits via RuvB. An RuvB hexamer assembles on each DNA strand where it exits the tetramer. Each RuvB hexamer is contacted by two RuvA subunits (via domain III) on 2 adjacent RuvB subunits; this complex drives branch migration. In the full resolvosome a probable DNA-RuvA(4)-RuvB(12)-RuvC(2) complex forms which resolves the HJ.

It is found in the cytoplasm. Its function is as follows. The RuvA-RuvB-RuvC complex processes Holliday junction (HJ) DNA during genetic recombination and DNA repair, while the RuvA-RuvB complex plays an important role in the rescue of blocked DNA replication forks via replication fork reversal (RFR). RuvA specifically binds to HJ cruciform DNA, conferring on it an open structure. The RuvB hexamer acts as an ATP-dependent pump, pulling dsDNA into and through the RuvAB complex. HJ branch migration allows RuvC to scan DNA until it finds its consensus sequence, where it cleaves and resolves the cruciform DNA. This chain is Holliday junction branch migration complex subunit RuvA, found in Shewanella sp. (strain MR-7).